The following is a 386-amino-acid chain: Cytochrome b (386 aa).

4 helical membrane passes run 32 to 52 (FGSLLALCLGIQIVTGVTLAM), 76 to 98 (WMIRYLHANTASFFFLFVYLHIG), 113 to 133 (PWSIGVIILILMMATAFLGYV), and 179 to 199 (FFSLHYLLPFILAALAVMHLL). Heme b is bound by residues H82 and H96. Heme b is bound by residues H183 and H197. H202 is a binding site for a ubiquinone. Helical transmembrane passes span 225–245 (YTFKDLVTIFLFFLVLALFLF), 289–309 (LGGVIAMFGSLLILLAMPLLD), 321–341 (LMKFFFWLLVVDFLILLWCGS), and 348–368 (FITLGQFATTFYFSWFLIIVP).

This sequence belongs to the cytochrome b family. As to quaternary structure, fungal cytochrome b-c1 complex contains 10 subunits; 3 respiratory subunits, 2 core proteins and 5 low-molecular weight proteins. Cytochrome b-c1 complex is a homodimer. It depends on heme b as a cofactor.

Its subcellular location is the mitochondrion inner membrane. Its function is as follows. Component of the ubiquinol-cytochrome c reductase complex (complex III or cytochrome b-c1 complex) that is part of the mitochondrial respiratory chain. The b-c1 complex mediates electron transfer from ubiquinol to cytochrome c. Contributes to the generation of a proton gradient across the mitochondrial membrane that is then used for ATP synthesis. The chain is Cytochrome b (cob) from Rhizopus oryzae (Mucormycosis agent).